Reading from the N-terminus, the 307-residue chain is Thymidylate synthase (307 aa).

The disordered stretch occupies residues 1–22; that stretch reads MLVEGSELQSGAQQPRTEAPQH. The span at 7–16 shows a compositional bias: polar residues; the sequence is ELQSGAQQPR. A dUMP-binding site is contributed by Arg-44. Residue Ser-108 is modified to Phosphoserine. Residues 169–170, 189–190, 209–212, Asn-220, and 250–252 each bind dUMP; these read RR, CH, RSGD, and HIY. Cys-189 functions as the Nucleophile in the catalytic mechanism. Asp-212 serves as a coordination point for (6R)-5,10-methylene-5,6,7,8-tetrahydrofolate. Glycyl lysine isopeptide (Lys-Gly) (interchain with G-Cter in SUMO2) cross-links involve residues Lys-286 and Lys-302. Ala-306 contributes to the (6R)-5,10-methylene-5,6,7,8-tetrahydrofolate binding site.

Belongs to the thymidylate synthase family. As to quaternary structure, homodimer.

The protein localises to the nucleus. It localises to the cytoplasm. The protein resides in the mitochondrion. Its subcellular location is the mitochondrion matrix. It is found in the mitochondrion inner membrane. The catalysed reaction is dUMP + (6R)-5,10-methylene-5,6,7,8-tetrahydrofolate = 7,8-dihydrofolate + dTMP. The protein operates within pyrimidine metabolism; dTTP biosynthesis. In terms of biological role, catalyzes the reductive methylation of 2'-deoxyuridine 5'-monophosphate (dUMP) to thymidine 5'-monophosphate (dTMP), using the cosubstrate, 5,10- methylenetetrahydrofolate (CH2H4folate) as a 1-carbon donor and reductant and contributes to the de novo mitochondrial thymidylate biosynthesis pathway. The chain is Thymidylate synthase (Tyms) from Rattus norvegicus (Rat).